The following is a 143-amino-acid chain: Large ribosomal subunit protein uL11 (143 aa).

Belongs to the universal ribosomal protein uL11 family. Part of the ribosomal stalk of the 50S ribosomal subunit. Interacts with L10 and the large rRNA to form the base of the stalk. L10 forms an elongated spine to which L12 dimers bind in a sequential fashion forming a multimeric L10(L12)X complex. Post-translationally, one or more lysine residues are methylated.

In terms of biological role, forms part of the ribosomal stalk which helps the ribosome interact with GTP-bound translation factors. In Polynucleobacter necessarius subsp. necessarius (strain STIR1), this protein is Large ribosomal subunit protein uL11.